The chain runs to 654 residues: tRNA 5-methylaminomethyl-2-thiouridine biosynthesis bifunctional protein MnmC (654 aa).

The segment at 1–236 (MTDRIVPATL…KRAMLVGEFA (236 aa)) is tRNA (mnm(5)s(2)U34)-methyltransferase. An FAD-dependent cmnm(5)s(2)U34 oxidoreductase region spans residues 260 to 654 (IGAGLAGCAA…IRALRRGRVA (395 aa)).

The protein in the N-terminal section; belongs to the methyltransferase superfamily. tRNA (mnm(5)s(2)U34)-methyltransferase family. This sequence in the C-terminal section; belongs to the DAO family. FAD is required as a cofactor.

Its subcellular location is the cytoplasm. The enzyme catalyses 5-aminomethyl-2-thiouridine(34) in tRNA + S-adenosyl-L-methionine = 5-methylaminomethyl-2-thiouridine(34) in tRNA + S-adenosyl-L-homocysteine + H(+). Functionally, catalyzes the last two steps in the biosynthesis of 5-methylaminomethyl-2-thiouridine (mnm(5)s(2)U) at the wobble position (U34) in tRNA. Catalyzes the FAD-dependent demodification of cmnm(5)s(2)U34 to nm(5)s(2)U34, followed by the transfer of a methyl group from S-adenosyl-L-methionine to nm(5)s(2)U34, to form mnm(5)s(2)U34. The polypeptide is tRNA 5-methylaminomethyl-2-thiouridine biosynthesis bifunctional protein MnmC (Burkholderia thailandensis (strain ATCC 700388 / DSM 13276 / CCUG 48851 / CIP 106301 / E264)).